Here is an 83-residue protein sequence, read N- to C-terminus: Acyl carrier protein (83 aa).

The Carrier domain occupies 2–77 (NEILSKIKSI…DANQYIKKYL (76 aa)). Residue Ser37 is modified to O-(pantetheine 4'-phosphoryl)serine.

It belongs to the acyl carrier protein (ACP) family. 4'-phosphopantetheine is transferred from CoA to a specific serine of apo-ACP by AcpS. This modification is essential for activity because fatty acids are bound in thioester linkage to the sulfhydryl of the prosthetic group.

It localises to the cytoplasm. Its pathway is lipid metabolism; fatty acid biosynthesis. Carrier of the growing fatty acid chain in fatty acid biosynthesis. In Karelsulcia muelleri (strain GWSS) (Sulcia muelleri), this protein is Acyl carrier protein.